A 74-amino-acid chain; its full sequence is MSNFRVESKIRLSDTDIAVLHQRIVQLESTVTRLAENDLQNTIDSKPLTEVIVRNSTNIEQLQKQMAQCSCGQF.

This is an uncharacterized protein from Invertebrate iridescent virus 3 (IIV-3).